The chain runs to 1400 residues: DNA-directed RNA polymerase subunit beta' (1400 aa).

Positions 71, 73, 86, and 89 each coordinate Zn(2+). 3 residues coordinate Mg(2+): Asp462, Asp464, and Asp466. 4 residues coordinate Zn(2+): Cys810, Cys884, Cys891, and Cys894. A disordered region spans residues 1377 to 1400 (REKQATIVPPAAPEAEPLALPPVE).

Belongs to the RNA polymerase beta' chain family. In terms of assembly, the RNAP catalytic core consists of 2 alpha, 1 beta, 1 beta' and 1 omega subunit. When a sigma factor is associated with the core the holoenzyme is formed, which can initiate transcription. Requires Mg(2+) as cofactor. Zn(2+) serves as cofactor.

It catalyses the reaction RNA(n) + a ribonucleoside 5'-triphosphate = RNA(n+1) + diphosphate. Its function is as follows. DNA-dependent RNA polymerase catalyzes the transcription of DNA into RNA using the four ribonucleoside triphosphates as substrates. The polypeptide is DNA-directed RNA polymerase subunit beta' (Rhodopseudomonas palustris (strain HaA2)).